Reading from the N-terminus, the 604-residue chain is Polycomb group protein EMF2B (604 aa).

The C2H2-type zinc-finger motif lies at 310–331 (CPFCLVPCGSFKGLGCHLNASH). Residues 396 to 440 (PHIVDSGSPEDAQAGSEDDYVQRENGSSVAHASVDPANSLHGSNL) form a disordered region. The VEFS-box stretch occupies residues 454–589 (LSVERADPRN…DARAMNACNT (136 aa)).

Belongs to the VEFS (VRN2-EMF2-FIS2-SU(Z)12) family. Component of the polycomb repressive complex 2 (PRC2), composed of the core PRC2 components FIE2, EZ1 and CLF. PRC2 methylates 'Lys-27' residues of histone H3 (H3K27me3), leading to transcriptional repression of the affected target gene. In terms of tissue distribution, widely expressed.

In terms of biological role, polycomb group (PcG) protein. PcG proteins act by forming multiprotein complexes, which are required to maintain the transcriptionally repressive state of homeotic genes throughout development. PcG proteins are not required to initiate repression, but to maintain it during later stages of development. They act via the methylation of histones, rendering chromatin heritably changed in its expressibility. Polycomb group (PcG) protein involved in the repression of flowering under long day (LD) conditions. Regulates floret development. This Oryza sativa subsp. japonica (Rice) protein is Polycomb group protein EMF2B.